A 141-amino-acid polypeptide reads, in one-letter code: Translation initiation factor 2 subunit beta (141 aa).

Belongs to the eIF-2-beta/eIF-5 family. Heterotrimer composed of an alpha, a beta and a gamma chain.

Functionally, eIF-2 functions in the early steps of protein synthesis by forming a ternary complex with GTP and initiator tRNA. In Sulfolobus acidocaldarius (strain ATCC 33909 / DSM 639 / JCM 8929 / NBRC 15157 / NCIMB 11770), this protein is Translation initiation factor 2 subunit beta.